The primary structure comprises 262 residues: 14-3-3-like protein A (262 aa).

The disordered stretch occupies residues 240–262; that stretch reads DNAEEGGDEIKEAASKPEGEGHS. A compositionally biased stretch (basic and acidic residues) spans 247–262; sequence DEIKEAASKPEGEGHS.

Belongs to the 14-3-3 family.

The protein is 14-3-3-like protein A of Hordeum vulgare (Barley).